We begin with the raw amino-acid sequence, 868 residues long: mRNA-capping enzyme (868 aa).

The N6-GMP-lysine intermediate role is filled by K282. An mRNA cap 0 methyltransferase domain is found at G594–N868. S-adenosyl-L-methionine is bound by residues K607, G624, D646, and L710–I712.

In the N-terminal section; belongs to the dsDNA virus mRNA guanylyltransferase family. This sequence in the C-terminal section; belongs to the class I-like SAM-binding methyltransferase superfamily. mRNA cap 0 methyltransferase family. Part of the viral DNA-directed RNA polymerase that consists of 8 polII-like subunits (RPB1, RPB2, RPB3, RPB5, RPB6, RPB7, RPB9, RPB10), a capping enzyme and a termination factor.

Its subcellular location is the virion. The catalysed reaction is a 5'-end triphospho-ribonucleoside in mRNA + H2O = a 5'-end diphospho-ribonucleoside in mRNA + phosphate + H(+). The enzyme catalyses a 5'-end diphospho-ribonucleoside in mRNA + GTP + H(+) = a 5'-end (5'-triphosphoguanosine)-ribonucleoside in mRNA + diphosphate. It catalyses the reaction a 5'-end (5'-triphosphoguanosine)-ribonucleoside in mRNA + S-adenosyl-L-methionine = a 5'-end (N(7)-methyl 5'-triphosphoguanosine)-ribonucleoside in mRNA + S-adenosyl-L-homocysteine. The protein operates within mRNA processing; mRNA capping. Its function is as follows. Probably catalyzes the second reaction in the mRNA cap formation pathway. Forms a covalent complex with GTP. This Ornithodoros (relapsing fever ticks) protein is mRNA-capping enzyme.